A 172-amino-acid polypeptide reads, in one-letter code: MLDAFTKVVAQADTRGRFVSDSQIDALKQLVADGTKRLDVVNRITASSSSIVTDAARALFEDQPQLIAPGGNAYTNRRIAACMRDMDIILRYVTYAVFSGDASVLEDRCLNGLRETYSALGVPGGSVAVGIDKMKAAAIALANDPNGVTRGDCSALMSELASYFDKAAAAVG.

The residue at position 72 (Asn-72) is an N4-methylasparagine. (2R,3E)-phycocyanobilin contacts are provided by Cys-82 and Cys-153.

It belongs to the phycobiliprotein family. In terms of assembly, heterodimer of an alpha and a beta subunit, which further assembles into trimers and the trimers into hexamers. Contains two covalently linked bilin chromophores.

Its subcellular location is the cellular thylakoid membrane. In terms of biological role, light-harvesting photosynthetic bile pigment-protein from the phycobiliprotein complex (phycobilisome, PBS). Phycocyanin is the major phycobiliprotein in the PBS rod. This Pseudanabaena tenuis (strain PCC 7409) protein is C-phycocyanin-2 beta subunit (cpcB2).